The following is a 269-amino-acid chain: Extracellular metalloprotease UREG_07765 (269 aa).

Positions 1 to 18 are cleaved as a signal peptide; the sequence is MRLSVSLLALAFGSLVAA. Asn-179 carries an N-linked (GlcNAc...) asparagine glycan. His-191 serves as a coordination point for Zn(2+). Glu-192 is an active-site residue. His-195 provides a ligand contact to Zn(2+). Residues 207-227 form a disordered region; the sequence is VSDTPPQRSSTQGCPSSRDSC. Residues 210–225 are compositionally biased toward polar residues; it reads TPPQRSSTQGCPSSRD. A disulfide bond links Cys-220 and Cys-246.

The protein belongs to the peptidase M43B family.

It localises to the secreted. Functionally, secreted metalloproteinase that allows assimilation of proteinaceous substrates. In Uncinocarpus reesii (strain UAMH 1704), this protein is Extracellular metalloprotease UREG_07765.